Consider the following 158-residue polypeptide: S-ribosylhomocysteine lyase (158 aa).

H55, H59, and C127 together coordinate Fe cation.

This sequence belongs to the LuxS family. As to quaternary structure, homodimer. Fe cation serves as cofactor.

It catalyses the reaction S-(5-deoxy-D-ribos-5-yl)-L-homocysteine = (S)-4,5-dihydroxypentane-2,3-dione + L-homocysteine. Functionally, involved in the synthesis of autoinducer 2 (AI-2) which is secreted by bacteria and is used to communicate both the cell density and the metabolic potential of the environment. The regulation of gene expression in response to changes in cell density is called quorum sensing. Catalyzes the transformation of S-ribosylhomocysteine (RHC) to homocysteine (HC) and 4,5-dihydroxy-2,3-pentadione (DPD). The chain is S-ribosylhomocysteine lyase from Geobacillus thermodenitrificans (strain NG80-2).